The following is a 407-amino-acid chain: Large ribosomal subunit protein uL4y (407 aa).

The tract at residues 57 to 96 (PYAVSKKAGHQTSAESWGTGRAVSRIPRVPGGGTHRAGQA) is disordered.

It belongs to the universal ribosomal protein uL4 family.

In Arabidopsis thaliana (Mouse-ear cress), this protein is Large ribosomal subunit protein uL4y (RPL4D).